The sequence spans 294 residues: Nucleotide-binding protein Smlt1108 (294 aa).

16 to 23 (GLSGSGKS) lines the ATP pocket. 69–72 (DVRG) is a binding site for GTP.

Belongs to the RapZ-like family.

Displays ATPase and GTPase activities. The polypeptide is Nucleotide-binding protein Smlt1108 (Stenotrophomonas maltophilia (strain K279a)).